Reading from the N-terminus, the 131-residue chain is Small ribosomal subunit protein uS8 (131 aa).

The protein belongs to the universal ribosomal protein uS8 family. As to quaternary structure, part of the 30S ribosomal subunit. Contacts proteins S5 and S12.

Functionally, one of the primary rRNA binding proteins, it binds directly to 16S rRNA central domain where it helps coordinate assembly of the platform of the 30S subunit. This chain is Small ribosomal subunit protein uS8, found in Cupriavidus necator (strain ATCC 17699 / DSM 428 / KCTC 22496 / NCIMB 10442 / H16 / Stanier 337) (Ralstonia eutropha).